The sequence spans 232 residues: Ribosomal RNA large subunit methyltransferase E (232 aa).

5 residues coordinate S-adenosyl-L-methionine: Gly64, Trp66, Asp97, Asp113, and Asp138. Lys178 serves as the catalytic Proton acceptor.

It belongs to the class I-like SAM-binding methyltransferase superfamily. RNA methyltransferase RlmE family.

The protein localises to the cytoplasm. The catalysed reaction is uridine(2552) in 23S rRNA + S-adenosyl-L-methionine = 2'-O-methyluridine(2552) in 23S rRNA + S-adenosyl-L-homocysteine + H(+). Specifically methylates the uridine in position 2552 of 23S rRNA at the 2'-O position of the ribose in the fully assembled 50S ribosomal subunit. This is Ribosomal RNA large subunit methyltransferase E from Leptothrix cholodnii (strain ATCC 51168 / LMG 8142 / SP-6) (Leptothrix discophora (strain SP-6)).